A 313-amino-acid chain; its full sequence is Platelet glycoprotein VI (313 aa).

A signal peptide spans 1 to 21 (MSPASPTFFCIGLCVLQVIQT). Topologically, residues 22–265 (QSGPLPKPSL…FGFAHQHYAK (244 aa)) are extracellular. Ig-like C2-type domains lie at 27–105 (PKPS…DQLE) and 115–197 (PSLS…APSD). Cys-49 and Cys-89 are disulfide-bonded. N-linked (GlcNAc...) asparagine glycosylation is present at Asn-93. Cys-135 and Cys-181 are disulfide-bonded. The interval 213–236 (VPTEESFPVTESSRRPSILPTNKI) is disordered. An N-linked (GlcNAc...) asparagine glycan is attached at Asn-244. A helical membrane pass occupies residues 266–286 (GNLVRICLGATIIIILLGLLA). The Cytoplasmic portion of the chain corresponds to 287–313 (EDWHSRKKCLQHRMRALQRPLPPLPLA).

As to quaternary structure, associated with Fc receptor gamma chain. The GPVI:FcRgamma complex is associated with the Src kinase family FYN and LYN. Interacts with TRAF4. Interacts with COL1A1, but not with COL4A4. As to expression, megakaryocytes and platelets.

It is found in the cell membrane. In terms of biological role, collagen receptor involved in collagen-induced platelet adhesion and activation. Plays a key role in platelet procoagulant activity and subsequent thrombin and fibrin formation. This procoagulant function may contribute to arterial and venous thrombus formation. The signaling pathway involves the FcR gamma-chain, the Src kinases (likely FYN or LYN) and SYK, the adapter protein LAT and leads to the activation of PLCG2. This Mus musculus (Mouse) protein is Platelet glycoprotein VI.